The primary structure comprises 168 residues: Small ribosomal subunit protein uS5 (168 aa).

The S5 DRBM domain occupies 11 to 74; that stretch reads YSEKVVKIDR…EAAKKHLVKI (64 aa).

The protein belongs to the universal ribosomal protein uS5 family. In terms of assembly, part of the 30S ribosomal subunit. Contacts proteins S4 and S8.

In terms of biological role, with S4 and S12 plays an important role in translational accuracy. Its function is as follows. Located at the back of the 30S subunit body where it stabilizes the conformation of the head with respect to the body. The chain is Small ribosomal subunit protein uS5 from Leptospira borgpetersenii serovar Hardjo-bovis (strain JB197).